A 796-amino-acid polypeptide reads, in one-letter code: Molybdenum cofactor sulfurase (796 aa).

An N6-(pyridoxal phosphate)lysine modification is found at K246. Residue C418 is part of the active site. An MOSC domain is found at 650–796 (LRLLRQSSQR…LTCGDVVVVT (147 aa)). S752 carries the post-translational modification Phosphoserine.

This sequence belongs to the class-V pyridoxal-phosphate-dependent aminotransferase family. MOCOS subfamily. Pyridoxal 5'-phosphate is required as a cofactor.

It catalyses the reaction Mo-molybdopterin + L-cysteine + AH2 = thio-Mo-molybdopterin + L-alanine + A + H2O. In terms of biological role, sulfurates the molybdenum cofactor. Sulfation of molybdenum is essential for xanthine dehydrogenase (XDH) and aldehyde oxidase (ADO) enzymes in which molybdenum cofactor is liganded by 1 oxygen and 1 sulfur atom in active form. This is Molybdenum cofactor sulfurase from Drosophila persimilis (Fruit fly).